The chain runs to 72 residues: Putative snRNP Sm-like protein (72 aa).

The Sm domain occupies 4–72; that stretch reads RPLDILNDAL…RGDNVVYVSP (69 aa).

This sequence belongs to the snRNP Sm proteins family.

The chain is Putative snRNP Sm-like protein from Methanococcoides burtonii (strain DSM 6242 / NBRC 107633 / OCM 468 / ACE-M).